A 569-amino-acid polypeptide reads, in one-letter code: 2-succinyl-5-enolpyruvyl-6-hydroxy-3-cyclohexene-1-carboxylate synthase (569 aa).

The protein belongs to the TPP enzyme family. MenD subfamily. In terms of assembly, homodimer. The cofactor is Mg(2+). Mn(2+) serves as cofactor. Thiamine diphosphate is required as a cofactor.

It catalyses the reaction isochorismate + 2-oxoglutarate + H(+) = 5-enolpyruvoyl-6-hydroxy-2-succinyl-cyclohex-3-ene-1-carboxylate + CO2. Its pathway is quinol/quinone metabolism; 1,4-dihydroxy-2-naphthoate biosynthesis; 1,4-dihydroxy-2-naphthoate from chorismate: step 2/7. It functions in the pathway quinol/quinone metabolism; menaquinone biosynthesis. Catalyzes the thiamine diphosphate-dependent decarboxylation of 2-oxoglutarate and the subsequent addition of the resulting succinic semialdehyde-thiamine pyrophosphate anion to isochorismate to yield 2-succinyl-5-enolpyruvyl-6-hydroxy-3-cyclohexene-1-carboxylate (SEPHCHC). This is 2-succinyl-5-enolpyruvyl-6-hydroxy-3-cyclohexene-1-carboxylate synthase from Shewanella sediminis (strain HAW-EB3).